Consider the following 479-residue polypeptide: Phosphatidylinositol 4-kinase type 2-alpha (479 aa).

M1 is subject to N-acetylmethionine. Positions 1-58 (MDETSPLVSPERAQPPEYTFPSGSGAHFPQVPGGAVRVAAAAGSGPSPPCSPGHDRER) are disordered. Phosphoserine is present on residues S5, S9, S44, S47, and S51. Residues 31-45 (VPGGAVRVAAAAGSG) show a composition bias toward low complexity. Positions 124–453 (SIYPERIYQG…VQMPPVIVET (330 aa)) constitute a PI3K/PI4K catalytic domain. The segment at 130–136 (IYQGSSG) is G-loop. ATP contacts are provided by residues 131-137 (YQGSSGS) and K152. The segment at 157–159 (EPY) is important for substrate binding. The important for interaction with membranes stretch occupies residues 165–178 (KWTKWLQKLCCPCC). Residues C174, C175, C177, and C178 are each lipidated (S-palmitoyl cysteine). 261 to 264 (QLFV) serves as a coordination point for ATP. Residues 268–276 (KDADYWLRR) are important for interaction with membranes. Residues 305–313 (RNTDRGNDN) form a catalytic loop region. Residues 344-364 (AIDNGLAFPLKHPDSWRAYPF) form an activation loop region. D346 is a binding site for ATP. The interval 359-368 (WRAYPFYWAW) is important for interaction with membranes. A Phosphoserine modification is found at S462.

Belongs to the PI3/PI4-kinase family. Type II PI4K subfamily. Associates with the BLOC-1 and the AP-3 complexes; the BLOC-1 complex is required for optimal binding of PI4K2A to the AP-3 complex. Interacts with BLOC1S5 and DTNBP1. Interacts with ITCH. Interacts with FOS; this interaction may enhance phosphatidylinositol phosphorylation activity. Interacts with ATG9A. Palmitoylated by ZDHHC3 and ZDHHC7 in the CCPCC motif. Palmitoylation is cholesterol-dependent, and required for TGN localization. In terms of processing, ubiquitinated by ITCH; this does not lead to proteasomal degradation. In terms of tissue distribution, detected in brain (at protein level).

Its subcellular location is the golgi apparatus. The protein resides in the trans-Golgi network membrane. It is found in the membrane raft. The protein localises to the endosome. It localises to the endosome membrane. Its subcellular location is the cytoplasmic vesicle. The protein resides in the cell projection. It is found in the dendrite. The protein localises to the presynaptic cell membrane. It localises to the synapse. Its subcellular location is the synaptosome. The protein resides in the mitochondrion. It is found in the membrane. The protein localises to the cell membrane. It localises to the perikaryon. Its subcellular location is the neuron projection. It catalyses the reaction a 1,2-diacyl-sn-glycero-3-phospho-(1D-myo-inositol) + ATP = a 1,2-diacyl-sn-glycero-3-phospho-(1D-myo-inositol 4-phosphate) + ADP + H(+). Its function is as follows. Membrane-bound phosphatidylinositol-4 kinase (PI4-kinase) that catalyzes the phosphorylation of phosphatidylinositol (PI) to phosphatidylinositol 4-phosphate (PI4P), a lipid that plays important roles in endocytosis, Golgi function, protein sorting and membrane trafficking and is required for prolonged survival of neurons. Besides, phosphorylation of phosphatidylinositol (PI) to phosphatidylinositol 4-phosphate (PI4P) is the first committed step in the generation of phosphatidylinositol 4,5-bisphosphate (PIP2), a precursor of the second messenger inositol 1,4,5-trisphosphate (InsP3). This Mus musculus (Mouse) protein is Phosphatidylinositol 4-kinase type 2-alpha (Pi4k2a).